A 391-amino-acid chain; its full sequence is Protein-glutamate methylesterase/protein-glutamine glutaminase of group 2 operon (391 aa).

One can recognise a Response regulatory domain in the interval 20 to 138 (RVMIVDDSVV…EPQAADIFKH (119 aa)). Asp-71 is modified (4-aspartylphosphate). The CheB-type methylesterase domain maps to 196 to 383 (PTAPRVLLIG…PLNQIGPKVV (188 aa)). Active-site residues include Ser-207, His-235, and Asp-331.

Belongs to the CheB family. Phosphorylated by CheA. Phosphorylation of the N-terminal regulatory domain activates the methylesterase activity.

It localises to the cytoplasm. The enzyme catalyses [protein]-L-glutamate 5-O-methyl ester + H2O = L-glutamyl-[protein] + methanol + H(+). It carries out the reaction L-glutaminyl-[protein] + H2O = L-glutamyl-[protein] + NH4(+). Involved in chemotaxis. Part of a chemotaxis signal transduction system that modulates chemotaxis in response to various stimuli. Catalyzes the demethylation of specific methylglutamate residues introduced into the chemoreceptors (methyl-accepting chemotaxis proteins or MCP) by CheR. Also mediates the irreversible deamidation of specific glutamine residues to glutamic acid. The polypeptide is Protein-glutamate methylesterase/protein-glutamine glutaminase of group 2 operon (Rhodopseudomonas palustris (strain ATCC BAA-98 / CGA009)).